We begin with the raw amino-acid sequence, 455 residues long: 12S seed storage protein CRB (455 aa).

Positions 1–24 (MGRVSSIISFSLTLLILFNGYTAQ) are cleaved as a signal peptide. 2 disulfide bridges follow: cysteine 30–cysteine 63 and cysteine 106–cysteine 276. 2 Cupin type-1 domains span residues 35-229 (LNAL…ETAQ) and 282-431 (ENLD…EEAK). Threonine 109 bears the Phosphothreonine mark. Phosphotyrosine is present on tyrosine 299. 2 positions are modified to phosphoserine: serine 301 and serine 367. 2 positions are modified to phosphothreonine: threonine 395 and threonine 420. The residue at position 436 (serine 436) is a Phosphoserine.

The protein belongs to the 11S seed storage protein (globulins) family. Hexamer; each subunit is composed of an acidic and a basic chain derived from a single precursor and linked by a disulfide bond. Post-translationally, ubiquitinated. In terms of processing, proteolytically processed during seed maturation at a conserved Asn-Gly peptide bond by an asparaginyl endopeptidase to produce two mature polypeptides referred to as alpha and beta subunits that are joined together by a disulfide bond. Phosphorylated in seeds on some Tyr residues in response to abscisic acid (ABA). As to expression, accumulates in seeds 8 days after anthesis.

The protein resides in the protein storage vacuole. Its function is as follows. Seed storage protein. The sequence is that of 12S seed storage protein CRB (CRB) from Arabidopsis thaliana (Mouse-ear cress).